Here is a 634-residue protein sequence, read N- to C-terminus: Ankyrin repeat and SOCS box protein 2 (634 aa).

In terms of domain architecture, UIM spans 26–45; the sequence is SEEELVQMAIEQSLADKTRG. Residues 35–81 are disordered; sequence IEQSLADKTRGPTPAETSVSSQTNHQPGHIHPWTRSSSPPESPPARA. The segment covering 49–60 has biased composition (polar residues); that stretch reads AETSVSSQTNHQ. ANK repeat units lie at residues 104–133, 137–167, 171–200, 204–233, 237–266, 270–299, 303–332, 336–365, 368–397, 410–439, 440–469, and 476–504; these read AAMDPVLKAIKEGDEEALKAMIQDGKNLAE, EGWLPLHEAAYYGKLGCLKVLQRAYPGTIDQ, QEETALYLATCREHLDCLLSLLQAGAEPDI, SRETPLYKACERKNAEAVRILVQYNADANH, RGWTALHESVSRNDLEVMEILVSGGAKVEA, YSITPLFVAAQSGQLEALRFLAKHGADINT, DSASALYEACKNEHEDVVEFLLSQGADANK, DGLLPLHVASKKGNYRIVQMLLPVTSRTRV, SGISPLHLAAERNHDAVLEALLAARFDVNT, RRTSALYFAVVNNNVYATELLLLAGADPNR, DVISPLLVAIRHGCLRTMQLLLDHGANIDA, and TAFPATIMFAMKCLSLLKFLMDLGCDGEP. Position 371 is a phosphoserine (serine 371). The 55-residue stretch at 580–634 folds into the SOCS box domain; that stretch reads EDWAVIKEKAEPPRPLAHLCRLRVRKAIGKYRIKLLDTLPLPGRLIRYLKYENTQ.

This sequence belongs to the ankyrin SOCS box (ASB) family. Component of a probable ECS E3 ubiquitin-protein ligase complex which contains CUL5, either RBX1 or RNF7/RBX2, Elongin BC complex (ELOB and ELOC) and ASB2. Interacts with SKP2. Through its interaction with SKP2, likely to bridge the formation of dimeric E3-ubiquitin-protein ligase complexes composed of an ECS complex and an SCF(SKP2) complex. Interacts with JAK2; the interaction targets JAK2 for Notch-mediated proteasomal degradation. Interacts with TCF3/E2A; the interaction is mediated by SKP2 and targets TCF3 for Notch-mediated proteasomal degradation. Interacts with DES. In terms of processing, monoubiquitinated.

It localises to the cytoplasm. The protein resides in the cytoskeleton. The protein localises to the stress fiber. It is found in the myofibril. Its subcellular location is the sarcomere. It localises to the z line. The protein operates within protein modification; protein ubiquitination. Its function is as follows. Substrate-recognition component of a SCF-like ECS (Elongin-Cullin-SOCS-box protein) E3 ubiquitin-protein ligase complex which mediates the ubiquitination and subsequent proteasomal degradation of target proteins. Mediates Notch-induced ubiquitination and degradation of substrates including E2A and JAK2. Required during embryonic heart development for complete heart looping. Required for cardiomyocyte differentiation. Involved in myogenic differentiation and targets filamin FLNB for proteasomal degradation but not filamin FLNA. Also targets DES for proteasomal degradation. Acts as a negative regulator of skeletal muscle mass. The protein is Ankyrin repeat and SOCS box protein 2 of Rattus norvegicus (Rat).